A 459-amino-acid polypeptide reads, in one-letter code: FBD-associated F-box protein At4g13985 (459 aa).

Positions 18–64 (VDRLRNLPDCLLFKILLNLPTKDVVKLSVLSRRWRNVWRYVPGLDLE) constitute an F-box domain. Residues 375–429 (KEGANILPGPRRFLTSLEYVKIAKPMAAEASEIKLKLVSYFLENSTILKKLTLCL) enclose the FBD domain.

In Arabidopsis thaliana (Mouse-ear cress), this protein is FBD-associated F-box protein At4g13985.